The chain runs to 356 residues: MSTRPQPDWYYHRHPYASTPLAEGEEPQLLPIQDQGNHKKSKIWMAYKAPIVRWYKNAMLVKDNFWKDLESSHQIIWYPYKGISESVGNSDYLHLFFLIFGYYLLNLLLIVAFTSILAWSLLVCIYLPFLGLFALPLAYMQTILISTTLCNSMVKGTDFVLFTRIYGVTFARKGLTELSEACETISFTPFVYRRSHRLGGLFSKRFYLVSLPQFFIFFFWYIFIAFMFLLLLLVPIVGPITINMLPFSPGMGFYYFEPYFVDVLHLDSRKLSKVYYKGFAKWLLYSISSGLLESIPILGGLFIGTNAVGASLWIVKEIKDRDQPAVPPSPPAEPEEPTVGSYAPPIQQSIAHINPP.

Topologically, residues 1 to 92 (MSTRPQPDWY…ISESVGNSDY (92 aa)) are cytoplasmic. A helical transmembrane segment spans residues 93-113 (LHLFFLIFGYYLLNLLLIVAF). At 114–115 (TS) the chain is on the extracellular side. The chain crosses the membrane as a helical span at residues 116–136 (ILAWSLLVCIYLPFLGLFALP). Topologically, residues 137–213 (LAYMQTILIS…KRFYLVSLPQ (77 aa)) are cytoplasmic. A helical membrane pass occupies residues 214–234 (FFIFFFWYIFIAFMFLLLLLV). Residues 235–294 (PIVGPITINMLPFSPGMGFYYFEPYFVDVLHLDSRKLSKVYYKGFAKWLLYSISSGLLES) lie on the Extracellular side of the membrane. Residues 295–315 (IPILGGLFIGTNAVGASLWIV) form a helical membrane-spanning segment. The Cytoplasmic segment spans residues 316–356 (KEIKDRDQPAVPPSPPAEPEEPTVGSYAPPIQQSIAHINPP). A disordered region spans residues 322 to 356 (DQPAVPPSPPAEPEEPTVGSYAPPIQQSIAHINPP). Over residues 346–356 (IQQSIAHINPP) the composition is skewed to polar residues.

The protein belongs to the LDS family.

It localises to the prospore membrane. The protein resides in the lipid droplet. It is found in the spore wall. Its function is as follows. Involved in spore wall assembly. The polypeptide is Outer spore wall protein LDS2 (Saccharomyces cerevisiae (strain ATCC 204508 / S288c) (Baker's yeast)).